Here is a 384-residue protein sequence, read N- to C-terminus: G protein-coupled receptor 88 (384 aa).

The Extracellular portion of the chain corresponds to 1–35; it reads MTNSSSTSTSSTTGGSLLLLCEEEESWAGRRIPVS. The N-linked (GlcNAc...) asparagine glycan is linked to Asn3. A helical transmembrane segment spans residues 36-56; sequence LLYSGLAIGGTLANGMVIYLV. Residues 57 to 73 are Cytoplasmic-facing; the sequence is SSFRKLQTTSNAFIVNG. Residues 74–94 form a helical membrane-spanning segment; sequence CAADLSVCALWMPQEAVLGLL. Residues 95–116 lie on the Extracellular side of the membrane; that stretch reads PTGSAEPPADWDGAGGSYRLLR. Residues 117–136 form a helical membrane-spanning segment; sequence GGLLGLGLTVSLLSHCLVAL. The Cytoplasmic segment spans residues 137–158; sequence NRYLLITRAPATYQALYQRRHT. The helical transmembrane segment at 159–179 threads the bilayer; the sequence is AGMLALSWALALGLVLLLPPW. Topologically, residues 180 to 195 are extracellular; the sequence is APRPGAAPPRVHYPAL. The chain crosses the membrane as a helical span at residues 196–216; the sequence is LAAAALLAQTALLLHCYLGIV. Residues 217–285 are Cytoplasmic-facing; it reads RRVRVSVKRV…RAQRRLSGLS (69 aa). The chain crosses the membrane as a helical span at residues 286 to 306; it reads VLLLCCVFLLATQPLVWVSLA. Topologically, residues 307-310 are extracellular; it reads SGFS. Residues 311–331 form a helical membrane-spanning segment; that stretch reads LPVPWGVQAASWLLCCALSAL. Residues 332-384 are Cytoplasmic-facing; it reads NPLLYTWRNEEFRRSVRSVLPGVGDAAAAAVAATAVPAVSQAQLGTRAAGQHW.

It belongs to the G-protein coupled receptor 1 family. In terms of tissue distribution, expressed predominantly in the striatum.

The protein localises to the cell membrane. It is found in the cell projection. Its subcellular location is the cilium membrane. The protein resides in the cytoplasm. It localises to the nucleus. Functionally, orphan G protein-coupled receptor implicated in a large repertoire of behavioral responses that engage motor activities, spatial learning, and emotional processing. May play a role in the regulation of cognitive and motor function. Couples with the heterotrimeric G protein complex of the G(i) subfamily, consisting of GNAI1, GNB1 and GNG2, thereby acting through a G(i)-mediated pathway. Plays a role in the attenuation of D1 dopamine receptor (D1R)-mediated cAMP response in ciliated cells. In non-ciliated cells, involved in the inhibition of the beta-2 adrenergic receptor (B2AR) response. This chain is G protein-coupled receptor 88 (GPR88), found in Homo sapiens (Human).